The primary structure comprises 239 residues: 2-C-methyl-D-erythritol 4-phosphate cytidylyltransferase (239 aa).

This sequence belongs to the IspD/TarI cytidylyltransferase family. IspD subfamily. Homodimer.

The catalysed reaction is 2-C-methyl-D-erythritol 4-phosphate + CTP + H(+) = 4-CDP-2-C-methyl-D-erythritol + diphosphate. The protein operates within isoprenoid biosynthesis; isopentenyl diphosphate biosynthesis via DXP pathway; isopentenyl diphosphate from 1-deoxy-D-xylulose 5-phosphate: step 2/6. Its function is as follows. Catalyzes the formation of 4-diphosphocytidyl-2-C-methyl-D-erythritol from CTP and 2-C-methyl-D-erythritol 4-phosphate (MEP). The polypeptide is 2-C-methyl-D-erythritol 4-phosphate cytidylyltransferase (Sodalis glossinidius (strain morsitans)).